Here is a 588-residue protein sequence, read N- to C-terminus: L-fucose isomerase (588 aa).

Catalysis depends on proton acceptor residues Glu335 and Asp359. Mn(2+) is bound by residues Glu335, Asp359, and His525.

It belongs to the L-fucose isomerase family. Mn(2+) serves as cofactor.

The protein localises to the cytoplasm. It catalyses the reaction L-fucose = L-fuculose. It participates in carbohydrate degradation; L-fucose degradation; L-lactaldehyde and glycerone phosphate from L-fucose: step 1/3. In terms of biological role, converts the aldose L-fucose into the corresponding ketose L-fuculose. The chain is L-fucose isomerase from Streptococcus pneumoniae (strain Taiwan19F-14).